The primary structure comprises 332 residues: tRNA U34 carboxymethyltransferase (332 aa).

Carboxy-S-adenosyl-L-methionine is bound by residues Lys96, Trp110, Lys115, Gly135, 186-187, Met204, Tyr208, and Arg323; that span reads LE.

This sequence belongs to the class I-like SAM-binding methyltransferase superfamily. CmoB family. Homotetramer.

The enzyme catalyses carboxy-S-adenosyl-L-methionine + 5-hydroxyuridine(34) in tRNA = 5-carboxymethoxyuridine(34) in tRNA + S-adenosyl-L-homocysteine + H(+). Catalyzes carboxymethyl transfer from carboxy-S-adenosyl-L-methionine (Cx-SAM) to 5-hydroxyuridine (ho5U) to form 5-carboxymethoxyuridine (cmo5U) at position 34 in tRNAs. This is tRNA U34 carboxymethyltransferase from Hydrogenovibrio crunogenus (strain DSM 25203 / XCL-2) (Thiomicrospira crunogena).